The sequence spans 469 residues: 3-isopropylmalate dehydratase large subunit (469 aa).

C349, C410, and C413 together coordinate [4Fe-4S] cluster.

Belongs to the aconitase/IPM isomerase family. LeuC type 1 subfamily. In terms of assembly, heterodimer of LeuC and LeuD. Requires [4Fe-4S] cluster as cofactor.

It catalyses the reaction (2R,3S)-3-isopropylmalate = (2S)-2-isopropylmalate. Its pathway is amino-acid biosynthesis; L-leucine biosynthesis; L-leucine from 3-methyl-2-oxobutanoate: step 2/4. Its function is as follows. Catalyzes the isomerization between 2-isopropylmalate and 3-isopropylmalate, via the formation of 2-isopropylmaleate. The polypeptide is 3-isopropylmalate dehydratase large subunit (Aromatoleum aromaticum (strain DSM 19018 / LMG 30748 / EbN1) (Azoarcus sp. (strain EbN1))).